Reading from the N-terminus, the 122-residue chain is Small ribosomal subunit protein uS13 (122 aa).

Residues 93–122 (RLSLPVRGQRTKTNSRTRKGKRKTVAGKKK) form a disordered region. The span at 101–122 (QRTKTNSRTRKGKRKTVAGKKK) shows a compositional bias: basic residues.

This sequence belongs to the universal ribosomal protein uS13 family. As to quaternary structure, part of the 30S ribosomal subunit. Forms a loose heterodimer with protein S19. Forms two bridges to the 50S subunit in the 70S ribosome.

Located at the top of the head of the 30S subunit, it contacts several helices of the 16S rRNA. In the 70S ribosome it contacts the 23S rRNA (bridge B1a) and protein L5 of the 50S subunit (bridge B1b), connecting the 2 subunits; these bridges are implicated in subunit movement. Contacts the tRNAs in the A and P-sites. The protein is Small ribosomal subunit protein uS13 of Chlamydia pneumoniae (Chlamydophila pneumoniae).